Here is a 534-residue protein sequence, read N- to C-terminus: 5,6-dihydroxyindole-2-carboxylic acid oxidase (534 aa).

The signal sequence occupies residues 1 to 23 (MLGPATFLPLTAALLLLIPGGRA). Over 24-477 (QFPRQCVTPE…WPSRALNFTE (454 aa)) the chain is Lumenal, melanosome. Cystine bridges form between C29–C40, C41–C65, C56–C99, C101–C110, and C113–C122. Residues N96 and N104 are each glycosylated (N-linked (GlcNAc...) asparagine). N-linked (GlcNAc...) asparagine glycans are attached at residues N175 and N181. Residues H192, H215, and H224 each coordinate Zn(2+). 2 cysteine pairs are disulfide-bonded: C258–C261 and C290–C303. Residues N304 and N350 are each glycosylated (N-linked (GlcNAc...) asparagine). Positions 377 and 381 each coordinate Zn(2+). N385 carries an N-linked (GlcNAc...) asparagine glycan. H404 is a Zn(2+) binding site. The helical transmembrane segment at 478–501 (IITIAVVAALVLVAVIFAAASCAV) threads the bilayer. The Cytoplasmic segment spans residues 502-534 (HRSRKDDVHQPLLGEQYPRYSEEYERDASQSAV).

The protein belongs to the tyrosinase family. Cu(2+) is required as a cofactor. The cofactor is Zn(2+).

It is found in the melanosome membrane. The catalysed reaction is 2 5,6-dihydroxyindole-2-carboxylate + O2 = 2 indole-5,6-quinone-2-carboxylate + 2 H2O. It participates in pigment biosynthesis; melanin biosynthesis. Plays a role in melanin biosynthesis. Catalyzes the oxidation of 5,6-dihydroxyindole-2-carboxylic acid (DHICA) into indole-5,6-quinone-2-carboxylic acid. May regulate or influence the type of melanin synthesized. Also to a lower extent, capable of hydroxylating tyrosine and producing melanin. The sequence is that of 5,6-dihydroxyindole-2-carboxylic acid oxidase (TYRP1) from Ambystoma mexicanum (Axolotl).